The following is a 1164-amino-acid chain: Shugoshin 2A (1164 aa).

Residues 62 to 113 (LSKEKENSRRITTEKMQLQKEVEKLNFENTFLRLKLNTLNKKLVEIESHVSN) are a coiled coil. Disordered stretches follow at residues 160–269 (SEND…VTMR), 287–314 (HQPT…NTQR), 390–492 (RKVK…PFSR), 521–541 (TFVI…DKDT), and 917–992 (PLDS…ETHG). Low complexity predominate over residues 182–198 (SKTSPDSTSSVSRQPSS). Polar residues-rich tracts occupy residues 238 to 247 (DQSPKSSLSE) and 288 to 299 (QPTSSPGSNWNN). Residues 390-412 (RKVKGASSDKKRESSKRECKDGS) show a composition bias toward basic and acidic residues. The segment covering 443–472 (CISSTEQPSQVNTQKKRTLQNSSDQENIQN) has biased composition (polar residues). The span at 525 to 541 (RKSEKDNLFPNQEDKDT) shows a compositional bias: basic and acidic residues. The span at 934-948 (GEQTNLPKMQKQSAG) shows a compositional bias: polar residues. Residue Ser1042 is modified to Phosphoserine. A disordered region spans residues 1092 to 1164 (ITTGTRNPHH…EPSLRSKMRR (73 aa)). A compositionally biased stretch (low complexity) spans 1112-1125 (TSLVLVDTSSVSDT). Over residues 1126-1140 (NPANPENESEGQSSH) the composition is skewed to polar residues.

Belongs to the shugoshin family. As to quaternary structure, part of an astrin (SPAG5)-kinastrin (SKAP) complex containing KNSTRN, SPAG5, PLK1, DYNLL1 and SGO2A. Interacts with CDCA8. Interacts with PPP2CA. As to expression, ubiquitously expressed in proliferating cells. Highly expressed in the testis and oocytes.

It is found in the nucleus. Its subcellular location is the chromosome. It localises to the centromere. The protein resides in the kinetochore. Its function is as follows. Cooperates with PPP2CA to protect centromeric cohesin from separase-mediated cleavage in oocytes specifically during meiosis I. Has a crucial role in protecting REC8 at centromeres from cleavage by separase. During meiosis, protects centromeric cohesion complexes until metaphase II/anaphase II transition, preventing premature release of meiosis-specific REC8 cohesin complexes from anaphase I centromeres. Is thus essential for an accurate gametogenesis. May act by targeting PPP2CA to centromeres, thus leading to cohesin dephosphorylation. Essential for recruiting KIF2C to the inner centromere and for correcting defective kinetochore attachments. Involved in centromeric enrichment of AUKRB in prometaphase. This is Shugoshin 2A from Mus musculus (Mouse).